A 185-amino-acid chain; its full sequence is Large ribosomal subunit protein uL16m (185 aa).

This sequence belongs to the universal ribosomal protein uL16 family.

The protein localises to the mitochondrion. This Oryza sativa subsp. japonica (Rice) protein is Large ribosomal subunit protein uL16m (RPL16).